The following is a 339-amino-acid chain: Anthranilate phosphoribosyltransferase (339 aa).

Residues glycine 79, 82 to 83 (GD), threonine 87, 89 to 92 (NIST), 107 to 115 (KHGNRAVSS), and serine 119 each bind 5-phospho-alpha-D-ribose 1-diphosphate. Residue glycine 79 coordinates anthranilate. Serine 91 provides a ligand contact to Mg(2+). Anthranilate is bound at residue asparagine 110. Arginine 165 contacts anthranilate. The Mg(2+) site is built by aspartate 224 and glutamate 225.

Belongs to the anthranilate phosphoribosyltransferase family. As to quaternary structure, homodimer. The cofactor is Mg(2+).

The catalysed reaction is N-(5-phospho-beta-D-ribosyl)anthranilate + diphosphate = 5-phospho-alpha-D-ribose 1-diphosphate + anthranilate. The protein operates within amino-acid biosynthesis; L-tryptophan biosynthesis; L-tryptophan from chorismate: step 2/5. Catalyzes the transfer of the phosphoribosyl group of 5-phosphorylribose-1-pyrophosphate (PRPP) to anthranilate to yield N-(5'-phosphoribosyl)-anthranilate (PRA). This chain is Anthranilate phosphoribosyltransferase, found in Geobacillus sp. (strain WCH70).